Consider the following 286-residue polypeptide: Octanoyltransferase (286 aa).

The BPL/LPL catalytic domain occupies 50-278 (LRTPDELWIV…NIAQRHAGVI (229 aa)). Substrate is bound by residues 89–96 (RGGQVTWH), 190–192 (SLG), and 203–205 (GVA). Cys221 acts as the Acyl-thioester intermediate in catalysis.

The protein belongs to the LipB family.

It is found in the cytoplasm. It catalyses the reaction octanoyl-[ACP] + L-lysyl-[protein] = N(6)-octanoyl-L-lysyl-[protein] + holo-[ACP] + H(+). It participates in protein modification; protein lipoylation via endogenous pathway; protein N(6)-(lipoyl)lysine from octanoyl-[acyl-carrier-protein]: step 1/2. Its function is as follows. Catalyzes the transfer of endogenously produced octanoic acid from octanoyl-acyl-carrier-protein onto the lipoyl domains of lipoate-dependent enzymes. Lipoyl-ACP can also act as a substrate although octanoyl-ACP is likely to be the physiological substrate. This is Octanoyltransferase from Psychrobacter arcticus (strain DSM 17307 / VKM B-2377 / 273-4).